Consider the following 617-residue polypeptide: UvrABC system protein C (617 aa).

Residues 22-100 enclose the GIY-YIG domain; the sequence is NLPGVYRFFN…IKALSPKYNI (79 aa). Positions 209–244 constitute a UVR domain; the sequence is DELTRTLQHKMQTAAANLQFEEAARYRDQIQALGIM.

The protein belongs to the UvrC family. In terms of assembly, interacts with UvrB in an incision complex.

It localises to the cytoplasm. Functionally, the UvrABC repair system catalyzes the recognition and processing of DNA lesions. UvrC both incises the 5' and 3' sides of the lesion. The N-terminal half is responsible for the 3' incision and the C-terminal half is responsible for the 5' incision. In Neisseria meningitidis serogroup B (strain ATCC BAA-335 / MC58), this protein is UvrABC system protein C.